Consider the following 727-residue polypeptide: Pentatricopeptide repeat-containing protein At4g20740 (727 aa).

The interval 1-84 (MKSPKPPNLS…PSPPSHSTVI (84 aa)) is disordered. Positions 38-56 (SNRQSIPRVSPQPQSNSLA) are enriched in polar residues. Over residues 59–70 (TPFDLRKWDPET) the composition is skewed to basic and acidic residues. 14 PPR repeats span residues 157–191 (DFAAYNAFAYCLNRNGHFRAADQLPELMDSQGRPP), 192–226 (SEKQFEILIRMHADNRRGLRVYYVYEKMKKFGFKP), 227–261 (RVFLYNRIMDALVKNGYFDLALAVYEDFKEDGLVE), 262–296 (ESTTFMILVKGLCKAGRIEEMLEILQRMRENLCKP), 297–331 (DVFAYTAMIKTLVSEGNLDASLRVWDEMRRDEIKP), 332–366 (DVMAYGTLVVGLCKDGRVERGYELFMEMKGKQILI), 367–401 (DREIYRVLIEGFVADGKVRSACNLWEDLVDSGYIA), 402–436 (DIGIYNAVIKGLCSVNQVDKAYKLFQVAIEEELEP), 437–471 (DFETLSPIMVAYVVMNRLSDFSNVLERIGELGYPV), 506–540 (SVSVYNILMEALYKMGDIQKSLSLFYEMRKLGFEP), 541–575 (DSSSYSIAICCFVEKGDVKAACSFHEKIIEMSCVP), 576–606 (SIAAYLSLTKGLCQIGEIDAVMLLVRECLGN), 612–646 (MEFKYALTVCHVCKGSNAEKVMKVVDEMNQEGVFI), and 647–681 (NEVIYCAIISGMSKHGTIKVAREVFTELKKRKVMT).

This sequence belongs to the PPR family. P subfamily.

This is Pentatricopeptide repeat-containing protein At4g20740 from Arabidopsis thaliana (Mouse-ear cress).